Here is a 181-residue protein sequence, read N- to C-terminus: uncharacterized protein (181 aa).

Residues 1 to 178 (MVVAYKLSNG…VFKKVFDNSL (178 aa)) enclose the Macro domain.

This is an uncharacterized protein from Sulfolobus acidocaldarius (strain ATCC 33909 / DSM 639 / JCM 8929 / NBRC 15157 / NCIMB 11770).